Here is a 147-residue protein sequence, read N- to C-terminus: MSLATKLRRVRKSPPEGWDLIEPTLEQFEAKMREAETEPHEGKRKTEINWPIFRIHHQRSRYVYDMYYKKAEISRELYEFCLTAKFADAALIAKWKKQGYENLCCVKCVNTRDSNFGTACICRVPKSKLDAERVIECVHCGCHGCSG.

Positions 8 to 12 match the Nuclear localization signal motif; it reads RRVRK.

Belongs to the BUD31 (G10) family. In terms of assembly, identified in the spliceosome C complex.

The protein resides in the nucleus. Its function is as follows. Involved in pre-mRNA splicing process. The sequence is that of Protein BUD31 homolog from Caenorhabditis elegans.